Consider the following 209-residue polypeptide: tRNA(Phe) 7-((3-amino-3-carboxypropyl)-4-demethylwyosine(37)-N(4))-methyltransferase (209 aa).

The protein belongs to the TYW3 family.

It carries out the reaction 4-demethyl-7-[(3S)-3-amino-3-carboxypropyl]wyosine(37) in tRNA(Phe) + S-adenosyl-L-methionine = 7-[(3S)-3-amino-3-carboxypropyl]wyosine(37) in tRNA(Phe) + S-adenosyl-L-homocysteine + H(+). In terms of biological role, S-adenosyl-L-methionine-dependent methyltransferase that acts as a component of the wyosine derivatives biosynthesis pathway. Probably methylates N-4 position of wybutosine-86 to produce wybutosine-72. The sequence is that of tRNA(Phe) 7-((3-amino-3-carboxypropyl)-4-demethylwyosine(37)-N(4))-methyltransferase from Saccharolobus solfataricus (strain ATCC 35092 / DSM 1617 / JCM 11322 / P2) (Sulfolobus solfataricus).